The sequence spans 107 residues: uncharacterized protein (107 aa).

Residues 1–34 form the signal peptide; it reads MRLQWPKFITFLSTGSCCLLFLLLPCSFFPLPTA.

This is an uncharacterized protein from Saccharomyces cerevisiae (strain ATCC 204508 / S288c) (Baker's yeast).